Consider the following 360-residue polypeptide: DNA replication and repair protein RecF (360 aa).

An ATP-binding site is contributed by 30 to 37; that stretch reads GNNGSGKT.

It belongs to the RecF family.

It localises to the cytoplasm. In terms of biological role, the RecF protein is involved in DNA metabolism; it is required for DNA replication and normal SOS inducibility. RecF binds preferentially to single-stranded, linear DNA. It also seems to bind ATP. The sequence is that of DNA replication and repair protein RecF from Mannheimia succiniciproducens (strain KCTC 0769BP / MBEL55E).